The primary structure comprises 350 residues: MPVLHNRISNDALKAKMLVESEPRTTISFYKYFHIADPKATRDALYQLFTALNVFGRVYLAHEGINAQISVPASNVETFRAQLYAFDPALEGLRLNIALDDDGKSFWVLRMKVRDRIVADGIDDPHFDASNVGEYLQAAEVNAMLDDPDALFIDMRNHYEYEVGHFENALEIPADTFREQLPKAVEMMQAHKDKKIVMYCTGGIRCEKASAWMKHNGFNKVWHIEGGIIEYARKAREQGLPVRFIGKNFVFDERMGERISDEIIAHCHQCGAPCDSHTNCKNDGCHLLFIQCPVCAEKYKGCCSEICCEESALPPEEQRRRRAGRENGNKIFNKSRGRLNTTLGIPDPTE.

Residues Asp-146–Leu-240 form the Rhodanese domain. Cys-200 functions as the Cysteine persulfide intermediate in the catalytic mechanism.

This sequence belongs to the TrhO family.

It carries out the reaction uridine(34) in tRNA + AH2 + O2 = 5-hydroxyuridine(34) in tRNA + A + H2O. In terms of biological role, catalyzes oxygen-dependent 5-hydroxyuridine (ho5U) modification at position 34 in tRNAs. This is tRNA uridine(34) hydroxylase from Shigella sonnei (strain Ss046).